The following is a 1516-amino-acid chain: Myosin-14 (1516 aa).

Residues 7 to 56 (NVGSCVWVEDPEVAWIDGEVIEVKGSDIKVKCTSGKTVAIKVSSAYPKDV) enclose the Myosin N-terminal SH3-like domain. Residues 61-738 (SGVDDMTRLA…QMADLDARRN (678 aa)) enclose the Myosin motor domain. Residues 155 to 162 (GESGAGKT) and 208 to 216 (NNNSSRFGK) each bind ATP. 4 actin-binding regions span residues 494–528 (LIEK…YQTF), 530–553 (DHKH…AGDV), 588–612 (FPLL…KQQL), and 612–634 (LVTL…KPNN). 6 consecutive IQ domains span residues 741 to 770 (LGRA…VATN), 764 to 793 (LRKV…DAAV), 789 to 818 (RDAA…AAVS), 812 to 841 (LYFA…DKAA), 837 to 866 (QDKA…AAIT), and 860 to 889 (LKKA…AAKE). Residues 890 to 1056 (TGVLEAAKSK…ENKILRQKSL (167 aa)) adopt a coiled-coil conformation. The tract at residues 1061-1085 (GHLPPTPVKGSQNGHFSSKESPFNG) is disordered. A compositionally biased stretch (polar residues) spans 1069-1084 (KGSQNGHFSSKESPFN). In terms of domain architecture, Dilute spans 1158–1463 (DRLVQMIGSA…IANMRVLMTE (306 aa)).

It belongs to the TRAFAC class myosin-kinesin ATPase superfamily. Myosin family. Plant myosin class XI subfamily. In terms of assembly, homodimer.

In terms of biological role, myosin heavy chain that is required for the cell cycle-regulated transport of various organelles and proteins for their segregation. Functions by binding with its tail domain to receptor proteins on organelles and exerting force with its N-terminal motor domain against actin filaments, thereby transporting its cargo along polarized actin cables. The polypeptide is Myosin-14 (XI-H) (Arabidopsis thaliana (Mouse-ear cress)).